We begin with the raw amino-acid sequence, 301 residues long: Ribonuclease H2 subunit A (301 aa).

The residue at position 1 (Met-1) is an N-acetylmethionine. The RNase H type-2 domain occupies 28-251; that stretch reads PCVLGVDEAG…AQAILEKEAE (224 aa). A divalent metal cation contacts are provided by Asp-34, Glu-35, and Asp-142. Position 217 is a phosphothreonine (Thr-217). The residue at position 258 (Ser-258) is a Phosphoserine.

Belongs to the RNase HII family. Eukaryotic subfamily. As to quaternary structure, the RNase H2 complex is a heterotrimer composed of the catalytic subunit RNASEH2A and the non-catalytic subunits RNASEH2B and RNASEH2C. The cofactor is Mn(2+). Requires Mg(2+) as cofactor.

Its subcellular location is the nucleus. The enzyme catalyses Endonucleolytic cleavage to 5'-phosphomonoester.. In terms of biological role, catalytic subunit of RNase HII, an endonuclease that specifically degrades the RNA of RNA:DNA hybrids. Participates in DNA replication, possibly by mediating the removal of lagging-strand Okazaki fragment RNA primers during DNA replication. Mediates the excision of single ribonucleotides from DNA:RNA duplexes. This chain is Ribonuclease H2 subunit A (Rnaseh2a), found in Rattus norvegicus (Rat).